Here is a 300-residue protein sequence, read N- to C-terminus: Free fatty acid receptor 1 (300 aa).

Topologically, residues 1–8 are extracellular; the sequence is MDLPPQLS. Residues 9 to 31 traverse the membrane as a helical segment; the sequence is FALYVSAFALGFPLNLLAIRGAV. Topologically, residues 32–41 are cytoplasmic; the sequence is SHAKLRLTPS. A helical transmembrane segment spans residues 42 to 64; it reads LVYTLHLACSDLLLAITLPLKAV. Topologically, residues 65–79 are extracellular; it reads EALASGVWPLPLPFC. C79 and C170 are disulfide-bonded. The chain crosses the membrane as a helical span at residues 80–101; that stretch reads PVFALAHFAPLYAGGGFLAALS. Residues 102-121 lie on the Cytoplasmic side of the membrane; it reads AGRYLGAAFPFGYQAIRRPC. A helical transmembrane segment spans residues 122–142; it reads YSWGVCVAIWALVLCHLGLAL. At 143–178 the chain is on the extracellular side; it reads GLEAPRGWVDNTTSSLGINIPVNGSPVCLEAWDPDS. N153 carries N-linked (GlcNAc...) asparagine glycosylation. Residues 179–200 traverse the membrane as a helical segment; it reads ARPARLSFSILLFFLPLVITAF. Residues 201–223 are Cytoplasmic-facing; that stretch reads CYVGCLRALVHSGLSHKRKLRAA. A helical transmembrane segment spans residues 224 to 248; it reads WVAGGALLTLLLCLGPYNASNVASF. The Extracellular portion of the chain corresponds to 249–256; sequence INPDLEGS. A helical membrane pass occupies residues 257-279; that stretch reads WRKLGLITGAWSVVLNPLVTGYL. Topologically, residues 280 to 300 are cytoplasmic; sequence GTGPGQGTICVTRTPRGTIQK.

Belongs to the G-protein coupled receptor 1 family. Expressed abundantly in pancreatic beta cells.

It is found in the cell membrane. In terms of biological role, G-protein coupled receptor for medium and long chain saturated and unsaturated fatty acids that plays an important role in glucose homeostasis. Fatty acid binding increases glucose-stimulated insulin secretion, and may also enhance the secretion of glucagon-like peptide 1 (GLP-1). May also play a role in bone homeostasis; receptor signaling activates pathways that inhibit osteoclast differentiation. Ligand binding leads to a conformation change that triggers signaling via G-proteins that activate phospholipase C, leading to an increase of the intracellular calcium concentration. Seems to act through a G(q) and G(i)-mediated pathway. Mediates the anti-inflammatory effects of omega-3 polyunsaturated fatty acids (PUFAs) via inhibition of NLRP3 inflammasome activation. This is Free fatty acid receptor 1 (Ffar1) from Rattus norvegicus (Rat).